The chain runs to 431 residues: Na(+)-translocating NADH-quinone reductase subunit F (431 aa).

Residues Ile10–Leu30 form a helical membrane-spanning segment. Residues Cys41–Tyr133 form the 2Fe-2S ferredoxin-type domain. Cys76, Cys82, Cys85, and Cys117 together coordinate [2Fe-2S] cluster. The FAD-binding FR-type domain maps to Ala136–Lys286.

Belongs to the NqrF family. As to quaternary structure, composed of six subunits; NqrA, NqrB, NqrC, NqrD, NqrE and NqrF. [2Fe-2S] cluster is required as a cofactor. The cofactor is FAD.

It is found in the cell inner membrane. The enzyme catalyses a ubiquinone + n Na(+)(in) + NADH + H(+) = a ubiquinol + n Na(+)(out) + NAD(+). NQR complex catalyzes the reduction of ubiquinone-1 to ubiquinol by two successive reactions, coupled with the transport of Na(+) ions from the cytoplasm to the periplasm. The first step is catalyzed by NqrF, which accepts electrons from NADH and reduces ubiquinone-1 to ubisemiquinone by a one-electron transfer pathway. This Chlamydia trachomatis serovar A (strain ATCC VR-571B / DSM 19440 / HAR-13) protein is Na(+)-translocating NADH-quinone reductase subunit F.